The sequence spans 264 residues: Acyl-[acyl-carrier-protein]--UDP-N-acetylglucosamine O-acyltransferase (264 aa).

Belongs to the transferase hexapeptide repeat family. LpxA subfamily. In terms of assembly, homotrimer.

It localises to the cytoplasm. It catalyses the reaction a (3R)-hydroxyacyl-[ACP] + UDP-N-acetyl-alpha-D-glucosamine = a UDP-3-O-[(3R)-3-hydroxyacyl]-N-acetyl-alpha-D-glucosamine + holo-[ACP]. It functions in the pathway glycolipid biosynthesis; lipid IV(A) biosynthesis; lipid IV(A) from (3R)-3-hydroxytetradecanoyl-[acyl-carrier-protein] and UDP-N-acetyl-alpha-D-glucosamine: step 1/6. Involved in the biosynthesis of lipid A, a phosphorylated glycolipid that anchors the lipopolysaccharide to the outer membrane of the cell. This chain is Acyl-[acyl-carrier-protein]--UDP-N-acetylglucosamine O-acyltransferase, found in Rickettsia felis (strain ATCC VR-1525 / URRWXCal2) (Rickettsia azadi).